Here is a 303-residue protein sequence, read N- to C-terminus: Heme A synthase (303 aa).

Residues 1-8 are Cytoplasmic-facing; sequence MFGKKNLK. A helical transmembrane segment spans residues 9–29; that stretch reads WLGVVATLMMTFVQLGGALVT. The Extracellular portion of the chain corresponds to 30-67; sequence KTGSADGCGSSWPLCHGALIPEFFPIDTIIELSHRAVS. C37 and C44 form a disulfide bridge. E60 is a catalytic residue. Residue H63 coordinates heme o. Residues 68–88 form a helical membrane-spanning segment; it reads ALSLLMVLWLVITAWKHIGYI. Topologically, residues 89–93 are cytoplasmic; sequence KEIKP. The helical transmembrane segment at 94-114 threads the bilayer; it reads LSIISVGFLLLQALIGAAAVI. Topologically, residues 115–125 are extracellular; that stretch reads WQQNDYVLALH. Heme o is bound at residue H125. The helical transmembrane segment at 126–146 threads the bilayer; the sequence is FGISLISFSSVFLITLIIFSI. The Cytoplasmic portion of the chain corresponds to 147 to 163; that stretch reads DQKYEADELYIKKPLRR. The helical transmembrane segment at 164 to 184 threads the bilayer; the sequence is LTWLMAIIIYCGVYTGALVRH. The Extracellular portion of the chain corresponds to 185–215; it reads ADASLAYGGWPLPFHDLVPHSEQDWVQLTHR. Position 214 (H214) interacts with heme b. The helical transmembrane segment at 216–236 threads the bilayer; the sequence is IMAFIVFTIIMITYIHAVKNY. The Cytoplasmic segment spans residues 237 to 244; it reads PNNRTVHY. Residues 245–265 traverse the membrane as a helical segment; the sequence is GYTAAFILVILQVITGALSIM. At 266 to 270 the chain is on the extracellular side; it reads TNVNL. A helical transmembrane segment spans residues 271–291; that stretch reads IIALFHALFITYLFGMTTYFI. H276 is a heme b binding site. Over 292-303 the chain is Cytoplasmic; sequence MLMLRSVRSDKQ.

This sequence belongs to the COX15/CtaA family. Type 1 subfamily. In terms of assembly, interacts with CtaB. It depends on heme b as a cofactor.

The protein resides in the cell membrane. It carries out the reaction Fe(II)-heme o + 2 A + H2O = Fe(II)-heme a + 2 AH2. Its pathway is porphyrin-containing compound metabolism; heme A biosynthesis; heme A from heme O: step 1/1. Its function is as follows. Catalyzes the conversion of heme O to heme A by two successive hydroxylations of the methyl group at C8. The first hydroxylation forms heme I, the second hydroxylation results in an unstable dihydroxymethyl group, which spontaneously dehydrates, resulting in the formyl group of heme A. The chain is Heme A synthase from Staphylococcus aureus (strain Mu3 / ATCC 700698).